Reading from the N-terminus, the 422-residue chain is MTQFWPAPAASGAVRATVPVPGSKSITNRALVLAALAEGPSTLRGPLRSRDTELMATALRALGADLQDGPEGSWQVAPGPLRGPAEVDCGLAGTVMRFLPPVAALAEGRITFDGDPRARERPLDAVLNALRALGADISGDSLPFELQGTGKLAGGAVTIDASASSQFVSGLLLSAPRFEQGVTVTHTGEPVPSLPHIDMTVSMLRAAGVEVDDSKRDVWHVAPGPIRALDLDVEPDLSNATPFLAAAAVTGGTVTVPGWPERTDQAGDAIRDILARMGATVELGPDGLTVTGPAELAPLDIDLHDVGELTPTVAALAAFASGRSRLRGVAHLRGHETDRLAALQRELSGLGGDVEQTDDGLLIEPRPLTGGNWHSYADHRMATAGAILGLLVPGVLVEDIATTRKTIPDFPGMWSSMLGAVD.

3-phosphoshikimate contacts are provided by Lys-24, Ser-25, and Arg-29. Lys-24 is a binding site for phosphoenolpyruvate. The phosphoenolpyruvate site is built by Gly-93 and Arg-121. 3-phosphoshikimate is bound by residues Ser-164, Ser-165, Gln-166, Glu-308, and His-335. Residue Gln-166 coordinates phosphoenolpyruvate. Residue Glu-308 is the Proton acceptor of the active site. Phosphoenolpyruvate-binding residues include Arg-339, Arg-380, and Lys-405.

It belongs to the EPSP synthase family. As to quaternary structure, monomer.

It localises to the cytoplasm. The catalysed reaction is 3-phosphoshikimate + phosphoenolpyruvate = 5-O-(1-carboxyvinyl)-3-phosphoshikimate + phosphate. Its pathway is metabolic intermediate biosynthesis; chorismate biosynthesis; chorismate from D-erythrose 4-phosphate and phosphoenolpyruvate: step 6/7. Its function is as follows. Catalyzes the transfer of the enolpyruvyl moiety of phosphoenolpyruvate (PEP) to the 5-hydroxyl of shikimate-3-phosphate (S3P) to produce enolpyruvyl shikimate-3-phosphate and inorganic phosphate. The protein is 3-phosphoshikimate 1-carboxyvinyltransferase of Saccharopolyspora erythraea (strain ATCC 11635 / DSM 40517 / JCM 4748 / NBRC 13426 / NCIMB 8594 / NRRL 2338).